We begin with the raw amino-acid sequence, 133 residues long: Small ribosomal subunit protein bS6 (133 aa).

It belongs to the bacterial ribosomal protein bS6 family.

Its function is as follows. Binds together with bS18 to 16S ribosomal RNA. This chain is Small ribosomal subunit protein bS6, found in Borrelia turicatae (strain 91E135).